We begin with the raw amino-acid sequence, 177 residues long: ATP-dependent protease subunit HslV (177 aa).

Residue Thr6 is part of the active site. Na(+)-binding residues include Ala162, Cys165, and Thr168.

It belongs to the peptidase T1B family. HslV subfamily. In terms of assembly, a double ring-shaped homohexamer of HslV is capped on each side by a ring-shaped HslU homohexamer. The assembly of the HslU/HslV complex is dependent on binding of ATP.

Its subcellular location is the cytoplasm. It catalyses the reaction ATP-dependent cleavage of peptide bonds with broad specificity.. Allosterically activated by HslU binding. Functionally, protease subunit of a proteasome-like degradation complex believed to be a general protein degrading machinery. This Lawsonia intracellularis (strain PHE/MN1-00) protein is ATP-dependent protease subunit HslV.